Consider the following 95-residue polypeptide: uncharacterized protein (95 aa).

Composition is skewed to basic and acidic residues over residues 1 to 28 (MRRA…KERC) and 41 to 53 (DERV…KGRP). Residues 1–73 (MRRAEVKRSA…RTSRAGSSWQ (73 aa)) are disordered.

This is an uncharacterized protein from Homo sapiens (Human).